We begin with the raw amino-acid sequence, 292 residues long: Proteasome subunit beta 2 (292 aa).

The propeptide at 1-59 (MTVDRAPRITDGDTRLSFGSNLSSFSEYLRVHAPEHLPQNRFADTGGVVMGGGDVAPHG) is removed in mature form; by autocatalysis. Thr-60 acts as the Nucleophile in catalysis.

It belongs to the peptidase T1B family. The 20S proteasome core is composed of 14 alpha and 14 beta subunits that assemble into four stacked heptameric rings, resulting in a barrel-shaped structure. The two inner rings, each composed of seven catalytic beta subunits, are sandwiched by two outer rings, each composed of seven alpha subunits. All four combinations of alpha- and beta-subunits (beta2-alpha1, beta2-alpha2, beta1-alpha2 and beta1-alpha1) yield fully assembled and proteolytically active proteasomes. The catalytic chamber with the active sites is on the inside of the barrel. Has probably a gated structure, the ends of the cylinder being occluded by the N-termini of the alpha-subunits. Is likely capped by the proteasome-associated ATPase, ARC.

Its subcellular location is the cytoplasm. It catalyses the reaction Cleavage of peptide bonds with very broad specificity.. The protein operates within protein degradation; proteasomal Pup-dependent pathway. With respect to regulation, the formation of the proteasomal ATPase ARC-20S proteasome complex, likely via the docking of the C-termini of ARC into the intersubunit pockets in the alpha-rings, may trigger opening of the gate for substrate entry. Interconversion between the open-gate and close-gate conformations leads to a dynamic regulation of the 20S proteasome proteolysis activity. In terms of biological role, component of the proteasome core, a large protease complex with broad specificity involved in protein degradation. The R.erythropolis proteasomes are able to cleave oligopeptides after Tyr, Phe and Leu, very poorly after Arg but not after Glu. Thus, displays chymotrypsin-like activity, low trypsin-like activity but no caspase-like activity. This chain is Proteasome subunit beta 2, found in Rhodococcus erythropolis (Arthrobacter picolinophilus).